A 164-amino-acid polypeptide reads, in one-letter code: Monothiol glutaredoxin-S10 (164 aa).

Residues 60–161 (EDSVKRTLAD…TMLSELDIDV (102 aa)) enclose the Glutaredoxin domain. Position 80 (C80) interacts with [2Fe-2S] cluster.

The protein belongs to the glutaredoxin family. CPYC subfamily.

Its subcellular location is the cytoplasm. Functionally, may only reduce GSH-thiol disulfides, but not protein disulfides. The polypeptide is Monothiol glutaredoxin-S10 (GRXS10) (Oryza sativa subsp. japonica (Rice)).